The primary structure comprises 2111 residues: Glutamate synthase [NADH] (2111 aa).

The Nucleophile role is filled by C69. The region spanning 69–469 (CGVGFTCHIK…PGRMLLVDTK (401 aa)) is the Glutamine amidotransferase type-2 domain. Positions 969–990 (GGKSNTGEGGEDPARSQRLANG) are disordered. Residue 1139–1191 (VAETHQTLVLNDLRGRVVIQTDGQIRTGRDVAIACLLGAEEWGFATTPLIALG) coordinates FMN. C1192, C1198, and C1203 together coordinate [3Fe-4S] cluster.

This sequence belongs to the glutamate synthase family. Homotrimer. [3Fe-4S] cluster is required as a cofactor. FAD serves as cofactor. Requires FMN as cofactor.

It is found in the cytoplasm. The enzyme catalyses 2 L-glutamate + NAD(+) = L-glutamine + 2-oxoglutarate + NADH + H(+). It participates in amino-acid biosynthesis; L-glutamate biosynthesis via GLT pathway; L-glutamate from 2-oxoglutarate and L-glutamine (NAD(+) route): step 1/1. The protein operates within energy metabolism; nitrogen metabolism. In the presence of 10 mM allantoin, the activity is reduced more than 25%. Forms L-glutamate from L-glutamine and 2-oxoglutarate. Represents an alternative pathway to L-glutamate dehydrogenase for the biosynthesis of L-glutamate. Participates with glutamine synthetase in ammonia assimilation processes. The enzyme is specific for NADH, L-glutamine and 2-oxoglutarate. In Schizosaccharomyces pombe (strain 972 / ATCC 24843) (Fission yeast), this protein is Glutamate synthase [NADH] (glt1).